Here is a 414-residue protein sequence, read N- to C-terminus: Putative polyketide beta-ketoacyl synthase 2 (414 aa).

One can recognise a Ketosynthase family 3 (KS3) domain in the interval 4–407; sequence PRRAVVTGLG…GNNSALVLRR (404 aa).

It belongs to the thiolase-like superfamily. Beta-ketoacyl-ACP synthases family.

Its function is as follows. Involved in developmentally regulated synthesis of a compound biosynthetically related to polyketide antibiotics which is essential for spore color in Streptomyces halstedii. The chain is Putative polyketide beta-ketoacyl synthase 2 (sch2) from Streptomyces halstedii.